A 238-amino-acid polypeptide reads, in one-letter code: uncharacterized protein (238 aa).

Disordered stretches follow at residues 1–51 and 214–238; these read MPCT…ASCA and ITVE…FPTA. A compositionally biased stretch (low complexity) spans 16 to 31; it reads ATWRTARPAPRRCGSC.

This is an uncharacterized protein from Streptomyces griseus.